The chain runs to 704 residues: DNA ligase (704 aa).

NAD(+) contacts are provided by residues 43–47, 92–93, and E124; these read DADYD and SL. Residue K126 is the N6-AMP-lysine intermediate of the active site. NAD(+)-binding residues include R147, E182, K298, and K322. C427, C430, C445, and C451 together coordinate Zn(2+). Residues 625-704 enclose the BRCT domain; that stretch reads PVASPVAGRI…DGWLRLIGDA (80 aa).

This sequence belongs to the NAD-dependent DNA ligase family. LigA subfamily. Requires Mg(2+) as cofactor. The cofactor is Mn(2+).

The catalysed reaction is NAD(+) + (deoxyribonucleotide)n-3'-hydroxyl + 5'-phospho-(deoxyribonucleotide)m = (deoxyribonucleotide)n+m + AMP + beta-nicotinamide D-nucleotide.. In terms of biological role, DNA ligase that catalyzes the formation of phosphodiester linkages between 5'-phosphoryl and 3'-hydroxyl groups in double-stranded DNA using NAD as a coenzyme and as the energy source for the reaction. It is essential for DNA replication and repair of damaged DNA. This chain is DNA ligase, found in Cereibacter sphaeroides (strain KD131 / KCTC 12085) (Rhodobacter sphaeroides).